Consider the following 631-residue polypeptide: Polyadenylate-binding protein 3 (631 aa).

4 consecutive RRM domains span residues 11–89 (ASLY…WSQR), 99–175 (GNIF…QFKS), 191–268 (PNVY…RAQK), and 294–370 (VNLY…LAQR). A Phosphotyrosine modification is found at Y140. Phosphoserine is present on S315. K361 carries the N6,N6-dimethyllysine; alternate modification. Residue K361 forms a Glycyl lysine isopeptide (Lys-Gly) (interchain with G-Cter in SUMO2); alternate linkage. Residue Y364 is modified to Phosphotyrosine. Residues R426, R430, and R449 each carry the omega-N-methylarginine modification. At R501 the chain carries Dimethylated arginine. Position 513 is an omega-N-methylarginine (R513). One can recognise a PABC domain in the interval 537 to 614 (QETLTASRLA…AVAVLQAHQA (78 aa)).

Belongs to the polyadenylate-binding protein type-1 family. In terms of tissue distribution, testis specific.

It localises to the cytoplasm. Binds the poly(A) tail of mRNA. May be involved in cytoplasmic regulatory processes of mRNA metabolism. Binds poly(A) with a slightly lower affinity as compared to PABPC1. The chain is Polyadenylate-binding protein 3 (PABPC3) from Homo sapiens (Human).